The following is a 162-amino-acid chain: Cyclic pyranopterin monophosphate synthase (162 aa).

Residues 75–77 (LCH) and 113–114 (ME) contribute to the substrate site. Residue Asp128 is part of the active site.

The protein belongs to the MoaC family. In terms of assembly, homohexamer; trimer of dimers.

The catalysed reaction is (8S)-3',8-cyclo-7,8-dihydroguanosine 5'-triphosphate = cyclic pyranopterin phosphate + diphosphate. It functions in the pathway cofactor biosynthesis; molybdopterin biosynthesis. In terms of biological role, catalyzes the conversion of (8S)-3',8-cyclo-7,8-dihydroguanosine 5'-triphosphate to cyclic pyranopterin monophosphate (cPMP). The polypeptide is Cyclic pyranopterin monophosphate synthase (Burkholderia cenocepacia (strain HI2424)).